The primary structure comprises 290 residues: Glutaredoxin domain-containing cysteine-rich protein 1 (290 aa).

One can recognise a Glutaredoxin domain in the interval 127 to 234 (LQQPSTDLEF…DILTKIERVQ (108 aa)).

It belongs to the GRXCR1 family. Expressed at low levels in adult lung, brain and duodenum with moderate levels in testis. Highly expressed in fetal cochlea.

It is found in the cell projection. The protein resides in the stereocilium. Its subcellular location is the microvillus. The protein localises to the kinocilium. May play a role in actin filament architecture in developing stereocilia of sensory cells. The sequence is that of Glutaredoxin domain-containing cysteine-rich protein 1 (GRXCR1) from Homo sapiens (Human).